A 428-amino-acid chain; its full sequence is MVRFESTDSLMLARQLPNKTVALILAGGRGSRLKDLTATRAKPAVHFGGKFRIIDFALSNCLNSGVRRIGVITQYQSHTLVQHIQRGWSFLNEEMNEFVDLLPAQQRLSTEQWYKGTADAVCQNLDIIRRYDAEYIVILAGDHIYKMDYSRMLLDHVEKGAECTVACIPVPISEGSEFGIMEVTADYQITAFYEKPANPPPIPGDPSNALASMGIYIFNADYLFKLLEEDNNTPGSSHDFGKDIIPQLTARKVVWAHPFDLSCVTSNAELPPYWRDVGTLDAYWRANLDLASVTPELDMYDRAWPIRTHMEPLPPAKFVQDRSGSHGMTMNSLVSGGCIVSGSVVVHSVLFPRVRVNSFCTIDSSLLLPDVHVGRSCRLRRCIIDRACHIPEGMVIGENANEDSARFYRSEGGVVLVTRDMLAKLEAK.

Alpha-D-glucose 1-phosphate is bound by residues Tyr114, Gly179, 194 to 195 (EK), and Ser212.

The protein belongs to the bacterial/plant glucose-1-phosphate adenylyltransferase family. As to quaternary structure, homotetramer.

It carries out the reaction alpha-D-glucose 1-phosphate + ATP + H(+) = ADP-alpha-D-glucose + diphosphate. Its pathway is glycan biosynthesis; glycogen biosynthesis. Involved in the biosynthesis of ADP-glucose, a building block required for the elongation reactions to produce glycogen. Catalyzes the reaction between ATP and alpha-D-glucose 1-phosphate (G1P) to produce pyrophosphate and ADP-Glc. In Yersinia pseudotuberculosis serotype IB (strain PB1/+), this protein is Glucose-1-phosphate adenylyltransferase.